A 268-amino-acid polypeptide reads, in one-letter code: Indole-3-glycerol phosphate synthase 2 (268 aa).

Belongs to the TrpC family.

The enzyme catalyses 1-(2-carboxyphenylamino)-1-deoxy-D-ribulose 5-phosphate + H(+) = (1S,2R)-1-C-(indol-3-yl)glycerol 3-phosphate + CO2 + H2O. It participates in amino-acid biosynthesis; L-tryptophan biosynthesis; L-tryptophan from chorismate: step 4/5. The protein is Indole-3-glycerol phosphate synthase 2 (trpC2) of Ralstonia nicotianae (strain ATCC BAA-1114 / GMI1000) (Ralstonia solanacearum).